A 226-amino-acid polypeptide reads, in one-letter code: UPF0758 protein gbs1168 (226 aa).

Residues 103 to 225 (QILSSEQLAR…YYSFREEADI (123 aa)) enclose the MPN domain. The Zn(2+) site is built by histidine 174, histidine 176, and aspartate 187. The JAMM motif signature appears at 174 to 187 (HNHPSGSPNPSESD).

This sequence belongs to the UPF0758 family.

The polypeptide is UPF0758 protein gbs1168 (Streptococcus agalactiae serotype III (strain NEM316)).